Here is a 68-residue protein sequence, read N- to C-terminus: DNA gyrase inhibitor YacG (68 aa).

Zn(2+) contacts are provided by cysteine 10, cysteine 13, cysteine 29, and cysteine 33.

Belongs to the DNA gyrase inhibitor YacG family. As to quaternary structure, interacts with GyrB. Requires Zn(2+) as cofactor.

Functionally, inhibits all the catalytic activities of DNA gyrase by preventing its interaction with DNA. Acts by binding directly to the C-terminal domain of GyrB, which probably disrupts DNA binding by the gyrase. This is DNA gyrase inhibitor YacG from Haemophilus influenzae (strain PittGG).